The primary structure comprises 385 residues: Chaperone protein DnaJ (385 aa).

The 66-residue stretch at 5–70 (DYYEVLGVAK…QKRAAYDRFG (66 aa)) folds into the J domain. The CR-type zinc-finger motif lies at 141–219 (GKTETIRIPT…CSGAGRVNRE (79 aa)). C154, C157, C171, C174, C193, C196, C207, and C210 together coordinate Zn(2+). 4 CXXCXGXG motif repeats span residues 154–161 (CETCSGTG), 171–178 (CSTCGGYG), 193–200 (CPNCHGRG), and 207–214 (CTACSGAG).

This sequence belongs to the DnaJ family. In terms of assembly, homodimer. Zn(2+) serves as cofactor.

It is found in the cytoplasm. In terms of biological role, participates actively in the response to hyperosmotic and heat shock by preventing the aggregation of stress-denatured proteins and by disaggregating proteins, also in an autonomous, DnaK-independent fashion. Unfolded proteins bind initially to DnaJ; upon interaction with the DnaJ-bound protein, DnaK hydrolyzes its bound ATP, resulting in the formation of a stable complex. GrpE releases ADP from DnaK; ATP binding to DnaK triggers the release of the substrate protein, thus completing the reaction cycle. Several rounds of ATP-dependent interactions between DnaJ, DnaK and GrpE are required for fully efficient folding. Also involved, together with DnaK and GrpE, in the DNA replication of plasmids through activation of initiation proteins. This chain is Chaperone protein DnaJ, found in Methylorubrum extorquens (strain PA1) (Methylobacterium extorquens).